The primary structure comprises 155 residues: Transcriptional repressor NrdR (155 aa).

Residues 3-34 (CPFCGHSNTQVLDTRMSEDGDAVRRRRRCEAC) fold into a zinc finger. The ATP-cone domain occupies 49 to 139 (PAIVKKNGSR…VYRSFEDVSE (91 aa)).

Belongs to the NrdR family. Requires Zn(2+) as cofactor.

Negatively regulates transcription of bacterial ribonucleotide reductase nrd genes and operons by binding to NrdR-boxes. This Cupriavidus necator (strain ATCC 17699 / DSM 428 / KCTC 22496 / NCIMB 10442 / H16 / Stanier 337) (Ralstonia eutropha) protein is Transcriptional repressor NrdR.